The sequence spans 123 residues: Small ribosomal subunit protein uS12 (123 aa).

The interval 1–32 (MPTINQLVRHGRKRSVKKTNTPALKASPQKRG) is disordered. Residue Asp-89 is modified to 3-methylthioaspartic acid.

Belongs to the universal ribosomal protein uS12 family. In terms of assembly, part of the 30S ribosomal subunit. Contacts proteins S8 and S17. May interact with IF1 in the 30S initiation complex.

Its function is as follows. With S4 and S5 plays an important role in translational accuracy. Interacts with and stabilizes bases of the 16S rRNA that are involved in tRNA selection in the A site and with the mRNA backbone. Located at the interface of the 30S and 50S subunits, it traverses the body of the 30S subunit contacting proteins on the other side and probably holding the rRNA structure together. The combined cluster of proteins S8, S12 and S17 appears to hold together the shoulder and platform of the 30S subunit. This Desulfatibacillum aliphaticivorans protein is Small ribosomal subunit protein uS12.